A 372-amino-acid chain; its full sequence is Citrate synthase 2 (372 aa).

His257 is an active-site residue. Ser284 is modified (phosphoserine). Asp308 is an active-site residue.

This sequence belongs to the citrate synthase family. In terms of assembly, homodimer.

The enzyme catalyses oxaloacetate + acetyl-CoA + H2O = citrate + CoA + H(+). It functions in the pathway carbohydrate metabolism; tricarboxylic acid cycle; isocitrate from oxaloacetate: step 1/2. Might regulate the synthesis and function of enzymes involved in later enzymatic steps of Krebs cycle. Loss in activity results in sporulation defect. In Bacillus subtilis (strain 168), this protein is Citrate synthase 2 (citZ).